The primary structure comprises 131 residues: D-ribose pyranase (131 aa).

The Proton donor role is filled by histidine 20. Residues aspartate 28, histidine 98, and 120–122 each bind substrate; that span reads YAN.

The protein belongs to the RbsD / FucU family. RbsD subfamily. As to quaternary structure, homodecamer.

The protein localises to the cytoplasm. It carries out the reaction beta-D-ribopyranose = beta-D-ribofuranose. The protein operates within carbohydrate metabolism; D-ribose degradation; D-ribose 5-phosphate from beta-D-ribopyranose: step 1/2. Catalyzes the interconversion of beta-pyran and beta-furan forms of D-ribose. The chain is D-ribose pyranase from Bacillus cereus (strain AH187).